The following is a 1251-amino-acid chain: Cyclic nucleotide-gated channel beta-1 (1251 aa).

Disordered regions lie at residues 1–75 (MLGW…QETK), 121–151 (ITED…EAQD), 172–252 (QPPK…TRDP), and 314–561 (EDAH…STNS). Residues 1-656 (MLGWVQRVLP…SIDPLTNLMY (656 aa)) are Cytoplasmic-facing. The segment covering 23 to 50 (EEEEVEPEPEMEAEVEPEPNPEEAETES) has biased composition (acidic residues). Over residues 238-247 (GSQAQTSSLP) the composition is skewed to polar residues. Basic and acidic residues predominate over residues 335–352 (EENKAVEKMPRELSRIEE). Positions 353-373 (EKEDEEEEEEEEEEEEEEEVT) are enriched in acidic residues. Residues 404-423 (KLWEEVGEEAKKEAEEKAKE) show a composition bias toward basic and acidic residues. Positions 424-434 (EAEEVAEEEAE) are enriched in acidic residues. A compositionally biased stretch (basic and acidic residues) spans 435–446 (KEPQDWAETKEE). The segment at 557-567 (ASTNSAIINDR) is calmodulin-binding CaM1. The IQ-like signature appears at 568–578 (LQELVKLFKER). The segment at 585–619 (KLIDPDVTSDEESPKPSPAKKAPEPAPDTKPAEAE) is disordered. The helical transmembrane segment at 657 to 678 (VLWLFFVVMAWNWNCWLIPVRW) threads the bilayer. Topologically, residues 679–687 (AFPYQTPDN) are extracellular. Residues 688–709 (IHHWLLMDYLCDLIYFLDITVF) traverse the membrane as a helical segment. The Cytoplasmic portion of the chain corresponds to 710 to 724 (QTRLQFVRGGDIITD). Residues 725 to 744 (KKDMRNNYLKSRRFKMDLLS) form a helical membrane-spanning segment. At 745–760 (LLPLDFLYLKVGVNPL) the chain is on the extracellular side. Residues 761–773 (LRLPRCLKYMAFF) traverse the membrane as a helical segment. At 774 to 785 (EFNSRLESILSK) the chain is on the cytoplasmic side. Residues 786 to 808 (AYVYRVIRTTAYLLYSLHLNSCL) traverse the membrane as a helical segment. Residues 786–885 (AYVYRVIRTT…IGQMRDVVGA (100 aa)) are ion conduction pathway. The Extracellular segment spans residues 809–831 (YYWASAYQGLGSTHWVYDGVGNS). Helical transmembrane passes span 832-858 (YIRC…LFEI) and 859-884 (VFQL…DVVG). Residues 885–1251 (AATAGQTYYR…MPEEREEKAE (367 aa)) are Cytoplasmic-facing. Residues 888 to 964 (AGQTYYRSCM…NIVSKVALFQ (77 aa)) are C-linker. The tract at residues 968-1084 (RQMIFDMLKR…LLRKKARRML (117 aa)) is cyclic nucleotide-binding domain. The 3',5'-cyclic GMP site is built by glycine 1029, glutamate 1030, serine 1032, arginine 1042, and threonine 1043. Residue arginine 1042 participates in 3',5'-cyclic AMP binding. The calmodulin-binding CaM2 stretch occupies residues 1148-1154 (QQELVEQ). Residues 1151 to 1251 (LVEQAKSSQD…MPEEREEKAE (101 aa)) form a disordered region. A compositionally biased stretch (pro residues) spans 1183 to 1203 (PPAPRTPPEPPGSPPSSPPPA). Residues 1242 to 1251 (MPEEREEKAE) show a composition bias toward basic and acidic residues.

The protein belongs to the cyclic nucleotide-gated cation channel (TC 1.A.1.5) family. CNGB1 subfamily. The rod cyclic nucleotide-gated channel is a heterotetramer composed of CNGA1 and CNGB1 subunits with 3:1 stoichiometry. CNGA1:CNGB1 channel binds Ca(2+)-bound CALM1 via CaM1 and CaM2 regions of the CNGB1 subunit; this interaction modulates the affinity of the channel for cNMPs in response to intracellular Ca(2+) levels. The olfactory cyclic nucleotide-gated channel is a heterotetramer composed of CNGA2, CNGA4 and CNGB1 subunits with 2:1:1 stoichiometry.

It localises to the cell membrane. The protein resides in the cell projection. It is found in the cilium membrane. It catalyses the reaction Ca(2+)(in) = Ca(2+)(out). The catalysed reaction is Na(+)(in) = Na(+)(out). The enzyme catalyses K(+)(in) = K(+)(out). It carries out the reaction NH4(+)(in) = NH4(+)(out). It catalyses the reaction Rb(+)(in) = Rb(+)(out). The catalysed reaction is Li(+)(in) = Li(+)(out). The enzyme catalyses Cs(+)(in) = Cs(+)(out). Pore-forming subunit of the rod cyclic nucleotide-gated channel. Mediates rod photoresponses at dim light converting transient changes in intracellular cGMP levels into electrical signals. In the dark, cGMP levels are high and keep the channel open enabling a steady inward current carried by Na(+) and Ca(2+) ions that leads to membrane depolarization and neurotransmitter release from synaptic terminals. Upon photon absorption cGMP levels decline leading to channel closure and membrane hyperpolarization that ultimately slows neurotransmitter release and signals the presence of light, the end point of the phototransduction cascade. Pore-forming subunit of the olfactory cyclic nucleotide-gated channel. Operates in the cilia of olfactory sensory neurons where chemical stimulation of the odorant is converted to an electrical signal. Mediates odorant-induced cAMP-dependent Ca(2+) influx triggering neuron depolarization. The rise of intracellular Ca(2+) levels potentiates the olfactory response by activating Ca(2+)-dependent Cl(-) channels, but it also serves as a negative feedback signal to desensitize the channel for rapid adaptation to odorants. Conducts cGMP- and cAMP-gated ion currents, with permeability for monovalent and divalent cations. The selectivity for Ca(2+) over Na(+) increases with cGMP concentrations, whereas the selectivity among monovalent ions is independent of the cGMP levels. In terms of biological role, high affinity rod photoreceptor phosphodiesterase (PDE6)-binding protein that modulates its catalytic properties: it is a regulator of spontaneous activation of rod PDE6, thereby serving to lower rod photoreceptor 'dark noise' and allowing these sensory cells to operate at the single photon detection limit. The polypeptide is Cyclic nucleotide-gated channel beta-1 (Homo sapiens (Human)).